The following is a 42-amino-acid chain: Iota-conotoxin-like R11.16 (42 aa).

4 disulfides stabilise this stretch: Cys5/Cys19, Cys12/Cys22, Cys18/Cys27, and Cys21/Cys36.

It belongs to the conotoxin I1 superfamily. In terms of tissue distribution, expressed by the venom duct.

Its subcellular location is the secreted. Functionally, iota-conotoxins bind to voltage-gated sodium channels (Nav) and act as agonists by shifting the voltage-dependence of activation to more hyperpolarized levels. Produces general excitatory symptoms. The protein is Iota-conotoxin-like R11.16 of Conus radiatus (Rayed cone).